Reading from the N-terminus, the 159-residue chain is Transcription elongation factor GreA (159 aa).

A coiled-coil region spans residues 44–75 (SENAEYDAAREQQSQTEARIADLESKLSSATI).

It belongs to the GreA/GreB family.

In terms of biological role, necessary for efficient RNA polymerase transcription elongation past template-encoded arresting sites. The arresting sites in DNA have the property of trapping a certain fraction of elongating RNA polymerases that pass through, resulting in locked ternary complexes. Cleavage of the nascent transcript by cleavage factors such as GreA or GreB allows the resumption of elongation from the new 3'terminus. GreA releases sequences of 2 to 3 nucleotides. This chain is Transcription elongation factor GreA, found in Chlorobium phaeovibrioides (strain DSM 265 / 1930) (Prosthecochloris vibrioformis (strain DSM 265)).